Consider the following 293-residue polypeptide: Fructose-bisphosphate aldolase (293 aa).

Serine 50 lines the D-glyceraldehyde 3-phosphate pocket. Catalysis depends on aspartate 85, which acts as the Proton donor. Zn(2+) is bound by residues histidine 86, aspartate 106, glutamate 136, and histidine 178. Glycine 179 is a dihydroxyacetone phosphate binding site. Histidine 208 provides a ligand contact to Zn(2+). Dihydroxyacetone phosphate is bound by residues 209-211 (GGS) and 230-233 (NVNT).

It belongs to the class II fructose-bisphosphate aldolase family. Zn(2+) is required as a cofactor.

The catalysed reaction is beta-D-fructose 1,6-bisphosphate = D-glyceraldehyde 3-phosphate + dihydroxyacetone phosphate. Its pathway is carbohydrate degradation; glycolysis; D-glyceraldehyde 3-phosphate and glycerone phosphate from D-glucose: step 4/4. In terms of biological role, catalyzes the aldol condensation of dihydroxyacetone phosphate (DHAP or glycerone-phosphate) with glyceraldehyde 3-phosphate (G3P) to form fructose 1,6-bisphosphate (FBP) in gluconeogenesis and the reverse reaction in glycolysis. This Streptococcus pneumoniae serotype 4 (strain ATCC BAA-334 / TIGR4) protein is Fructose-bisphosphate aldolase (fba).